A 137-amino-acid polypeptide reads, in one-letter code: Large ribosomal subunit protein uL16 (137 aa).

This sequence belongs to the universal ribosomal protein uL16 family. As to quaternary structure, part of the 50S ribosomal subunit.

Binds 23S rRNA and is also seen to make contacts with the A and possibly P site tRNAs. The polypeptide is Large ribosomal subunit protein uL16 (Leptospira biflexa serovar Patoc (strain Patoc 1 / Ames)).